An 89-amino-acid polypeptide reads, in one-letter code: Small ribosomal subunit protein uS15 (89 aa).

The protein belongs to the universal ribosomal protein uS15 family. As to quaternary structure, part of the 30S ribosomal subunit. Forms a bridge to the 50S subunit in the 70S ribosome, contacting the 23S rRNA.

One of the primary rRNA binding proteins, it binds directly to 16S rRNA where it helps nucleate assembly of the platform of the 30S subunit by binding and bridging several RNA helices of the 16S rRNA. Functionally, forms an intersubunit bridge (bridge B4) with the 23S rRNA of the 50S subunit in the ribosome. The polypeptide is Small ribosomal subunit protein uS15 (Erwinia tasmaniensis (strain DSM 17950 / CFBP 7177 / CIP 109463 / NCPPB 4357 / Et1/99)).